The primary structure comprises 429 residues: Protein cereblon (429 aa).

Positions 1-30 (MGNHLPLLPAESEEEDEMEVEDQDSKEAKK) are disordered. The span at 11–22 (ESEEEDEMEVED) shows a compositional bias: acidic residues. Ser12 is modified (phosphoserine). In terms of domain architecture, Lon N-terminal spans 68-306 (IPVLPQVMMI…CELDIMNKCT (239 aa)). A CULT domain is found at 305–413 (CTSLCCKQCQ…LTRSALLPTI (109 aa)). Cys310 and Cys313 together coordinate Zn(2+). Residues His365, Trp367, and Trp373 each coordinate (S)-thalidomide. 2 residues coordinate Zn(2+): Cys378 and Cys381.

It belongs to the CRBN family. As to quaternary structure, component of a DCX (DDB1-CUL4-X-box) protein ligase complex, at least composed of CRBN, CUL4A, DDB1 and RBX1. Interacts directly with DDB1. Interacts with KCNT1. Interacts with ILF2. Interacts with TRAF6 and ECSIT. In terms of processing, ubiquitinated, ubiquitination is mediated by its own DCX protein ligase complex.

The protein resides in the cytoplasm. The protein localises to the nucleus. It localises to the membrane. Its pathway is protein modification; protein ubiquitination. Its function is as follows. Substrate recognition component of a DCX (DDB1-CUL4-X-box) E3 protein ligase complex that mediates the ubiquitination and subsequent proteasomal degradation of target proteins, such as MEIS2, ILF2 or GLUL. Normal degradation of key regulatory proteins is required for normal limb outgrowth and expression of the fibroblast growth factor FGF8. Maintains presynaptic glutamate release and consequently cognitive functions, such as memory and learning, by negatively regulating large-conductance calcium-activated potassium (BK) channels in excitatory neurons. Likely to function by regulating the assembly and neuronal surface expression of BK channels via its interaction with KCNT1. May also be involved in regulating anxiety-like behaviors via a BK channel-independent mechanism. Plays a negative role in TLR4 signaling by interacting with TRAF6 and ECSIT, leading to inhibition of ECSIT ubiquitination, an important step of the signaling. The polypeptide is Protein cereblon (CRBN) (Pongo abelii (Sumatran orangutan)).